We begin with the raw amino-acid sequence, 528 residues long: Major facilitator-type transporter psiT2 (528 aa).

The segment at 1–20 (MSPERSASLEPDEHSSLLSD) is disordered. The next 5 membrane-spanning stretches (helical) occupy residues 87–107 (FYSG…IFML), 125–145 (LGVA…MMLV), 148–168 (VCAG…SELT), 174–194 (ALVV…GPLI), and 220–240 (FLPS…GYFF). Over residues 260 to 270 (STSSISSRTST) the composition is skewed to low complexity. Residues 260-299 (STSSISSRTSTLYGATDDHNRDASESTALSPEEAEDEIDS) form a disordered region. Transmembrane regions (helical) follow at residues 322–342 (FLMF…FTAV), 357–377 (AFSV…PWVL), 388–408 (FCMF…PLAQ), 424–444 (GLLY…VMAF), 460–479 (LATA…ALCP), and 493–513 (NILG…AGVW).

It belongs to the major facilitator superfamily. TCR/Tet family.

It is found in the membrane. Its function is as follows. Major facilitator-type transporter; part of the gene cluster that mediates the biosynthesis of psilocybin, a psychotropic tryptamine-derived natural product. In Psilocybe cyanescens, this protein is Major facilitator-type transporter psiT2.